A 442-amino-acid chain; its full sequence is 3-phosphoshikimate 1-carboxyvinyltransferase (442 aa).

3 residues coordinate 3-phosphoshikimate: Lys25, Ser26, and Arg30. Residue Lys25 participates in phosphoenolpyruvate binding. Positions 97 and 125 each coordinate phosphoenolpyruvate. 3-phosphoshikimate contacts are provided by Ser170, Ser171, Gln172, Asp323, and Lys350. Gln172 provides a ligand contact to phosphoenolpyruvate. Asp323 acts as the Proton acceptor in catalysis. The phosphoenolpyruvate site is built by Arg354 and Arg399.

This sequence belongs to the EPSP synthase family. As to quaternary structure, monomer.

Its subcellular location is the cytoplasm. The catalysed reaction is 3-phosphoshikimate + phosphoenolpyruvate = 5-O-(1-carboxyvinyl)-3-phosphoshikimate + phosphate. Its pathway is metabolic intermediate biosynthesis; chorismate biosynthesis; chorismate from D-erythrose 4-phosphate and phosphoenolpyruvate: step 6/7. Its function is as follows. Catalyzes the transfer of the enolpyruvyl moiety of phosphoenolpyruvate (PEP) to the 5-hydroxyl of shikimate-3-phosphate (S3P) to produce enolpyruvyl shikimate-3-phosphate and inorganic phosphate. In Bartonella tribocorum (strain CIP 105476 / IBS 506), this protein is 3-phosphoshikimate 1-carboxyvinyltransferase.